The chain runs to 189 residues: Peptidyl-tRNA hydrolase (189 aa).

Residue tyrosine 14 coordinates tRNA. Histidine 19 acts as the Proton acceptor in catalysis. TRNA contacts are provided by tyrosine 64, asparagine 66, and asparagine 112.

This sequence belongs to the PTH family. In terms of assembly, monomer.

It is found in the cytoplasm. It carries out the reaction an N-acyl-L-alpha-aminoacyl-tRNA + H2O = an N-acyl-L-amino acid + a tRNA + H(+). Its function is as follows. Hydrolyzes ribosome-free peptidyl-tRNAs (with 1 or more amino acids incorporated), which drop off the ribosome during protein synthesis, or as a result of ribosome stalling. Functionally, catalyzes the release of premature peptidyl moieties from peptidyl-tRNA molecules trapped in stalled 50S ribosomal subunits, and thus maintains levels of free tRNAs and 50S ribosomes. This is Peptidyl-tRNA hydrolase from Clostridium botulinum (strain Loch Maree / Type A3).